The following is a 361-amino-acid chain: Putative agmatine deiminase (361 aa).

C354 acts as the Amidino-cysteine intermediate in catalysis.

Belongs to the agmatine deiminase family.

The enzyme catalyses agmatine + H2O = N-carbamoylputrescine + NH4(+). This chain is Putative agmatine deiminase, found in Streptococcus pneumoniae (strain ATCC BAA-255 / R6).